Reading from the N-terminus, the 543-residue chain is CTP synthase (543 aa).

The tract at residues 1–265 (MARYIFITGG…DDEVLAAFGI (265 aa)) is amidoligase domain. Ser-13 provides a ligand contact to CTP. Ser-13 contacts UTP. An ATP-binding site is contributed by 14–19 (SLGKGL). Position 54 (Tyr-54) interacts with L-glutamine. Asp-71 serves as a coordination point for ATP. 2 residues coordinate Mg(2+): Asp-71 and Glu-139. CTP-binding positions include 146 to 148 (DIE), 186 to 191 (KTKPTQ), and Lys-222. Residues 186-191 (KTKPTQ) and Lys-222 contribute to the UTP site. An ATP-binding site is contributed by 238 to 240 (RDV). A Glutamine amidotransferase type-1 domain is found at 291–542 (TIAIVGKYTG…VQAAVVQSRL (252 aa)). Gly-353 is an L-glutamine binding site. Cys-380 functions as the Nucleophile; for glutamine hydrolysis in the catalytic mechanism. Residues 381-384 (FGMQ), Glu-404, and Arg-470 each bind L-glutamine. Catalysis depends on residues His-515 and Glu-517.

It belongs to the CTP synthase family. In terms of assembly, homotetramer.

It carries out the reaction UTP + L-glutamine + ATP + H2O = CTP + L-glutamate + ADP + phosphate + 2 H(+). The catalysed reaction is L-glutamine + H2O = L-glutamate + NH4(+). It catalyses the reaction UTP + NH4(+) + ATP = CTP + ADP + phosphate + 2 H(+). Its pathway is pyrimidine metabolism; CTP biosynthesis via de novo pathway; CTP from UDP: step 2/2. Its activity is regulated as follows. Allosterically activated by GTP, when glutamine is the substrate; GTP has no effect on the reaction when ammonia is the substrate. The allosteric effector GTP functions by stabilizing the protein conformation that binds the tetrahedral intermediate(s) formed during glutamine hydrolysis. Inhibited by the product CTP, via allosteric rather than competitive inhibition. In terms of biological role, catalyzes the ATP-dependent amination of UTP to CTP with either L-glutamine or ammonia as the source of nitrogen. Regulates intracellular CTP levels through interactions with the four ribonucleotide triphosphates. The protein is CTP synthase of Rhodopseudomonas palustris (strain BisB18).